Consider the following 29-residue polypeptide: Galanin (29 aa).

Residue T29 is modified to Threonine amide.

This sequence belongs to the galanin family.

The protein localises to the secreted. Functionally, contracts smooth muscle of the gastrointestinal and genitourinary tract, regulates growth hormone release, modulates insulin release, and may be involved in the control of adrenal secretion. This is Galanin (GAL) from Gallus gallus (Chicken).